A 240-amino-acid chain; its full sequence is Orotidine 5'-phosphate decarboxylase (240 aa).

Substrate-binding positions include Asp15, Lys37, 64 to 73 (DLKYHDIPNT), Thr127, Arg188, Gln197, Gly217, and Arg218. The active-site Proton donor is Lys66.

This sequence belongs to the OMP decarboxylase family. Type 1 subfamily. Homodimer.

The enzyme catalyses orotidine 5'-phosphate + H(+) = UMP + CO2. It participates in pyrimidine metabolism; UMP biosynthesis via de novo pathway; UMP from orotate: step 2/2. Functionally, catalyzes the decarboxylation of orotidine 5'-monophosphate (OMP) to uridine 5'-monophosphate (UMP). This is Orotidine 5'-phosphate decarboxylase from Geobacter sp. (strain M21).